The primary structure comprises 217 residues: Magnetosome protein MamA (217 aa).

TPR repeat units follow at residues 12-44 (VTLY…NDDI), 46-79 (QVYY…DAFD), 80-113 (VDVA…APDN), 114-147 (VKVA…NPIN), 148-181 (FNVR…RPNE), and 182-215 (GKVH…DEGA). Residues 41 to 112 (NDDIRQVYYR…LERSLADAPD (72 aa)) are N-terminal domain (NTD). A C-terminal domain (CTD) region spans residues 113–217 (NVKVATVLGL…ANELDEGASV (105 aa)).

The protein belongs to the magnetosome MamA family. Oligomerizes into high molecular weight complexes (at least 560 kDa). Forms round, 20 nm diameter complexes with a central cavity. Interacts with full-length Mms6. Probably binds MamC.

The protein localises to the magnetosome membrane. Its function is as follows. Probably forms a large homooligomer on which other magnetosome subunits assemble. Required for formation of functional magnetosomes from pre-existing vesicles, it has a dynamic location in the cell. This Paramagnetospirillum magneticum (strain ATCC 700264 / AMB-1) (Magnetospirillum magneticum) protein is Magnetosome protein MamA.